Here is a 353-residue protein sequence, read N- to C-terminus: UPF0283 membrane protein YPA_1696 (353 aa).

The next 3 helical transmembrane spans lie at 71–91 (MVTAGMVILGASVIAQSVQWV), 101–121 (IALGATTAGGLIILAGVGSVV), and 214–234 (ESALMIAVSPLALVDMAFIAW).

The protein belongs to the UPF0283 family.

Its subcellular location is the cell inner membrane. The protein is UPF0283 membrane protein YPA_1696 of Yersinia pestis bv. Antiqua (strain Antiqua).